Here is a 175-residue protein sequence, read N- to C-terminus: Interleukin-10 (175 aa).

The N-terminal stretch at 1–18 (MPSSALLYCLIFLAGVAA) is a signal peptide. 2 cysteine pairs are disulfide-bonded: cysteine 26-cysteine 122 and cysteine 76-cysteine 128. A glycan (N-linked (GlcNAc...) asparagine) is linked at asparagine 130.

It belongs to the IL-10 family. Homodimer. Interacts with IL10RA and IL10RB.

The protein localises to the secreted. Functionally, major immune regulatory cytokine that acts on many cells of the immune system where it has profound anti-inflammatory functions, limiting excessive tissue disruption caused by inflammation. Mechanistically, IL10 binds to its heterotetrameric receptor comprising IL10RA and IL10RB leading to JAK1 and STAT2-mediated phosphorylation of STAT3. In turn, STAT3 translocates to the nucleus where it drives expression of anti-inflammatory mediators. Targets antigen-presenting cells (APCs) such as macrophages and monocytes and inhibits their release of pro-inflammatory cytokines including granulocyte-macrophage colony-stimulating factor /GM-CSF, granulocyte colony-stimulating factor/G-CSF, IL-1 alpha, IL-1 beta, IL-6, IL-8 and TNF-alpha. Also interferes with antigen presentation by reducing the expression of MHC-class II and co-stimulatory molecules, thereby inhibiting their ability to induce T cell activation. In addition, controls the inflammatory response of macrophages by reprogramming essential metabolic pathways including mTOR signaling. This chain is Interleukin-10 (IL10), found in Sus scrofa (Pig).